Reading from the N-terminus, the 443-residue chain is Signal recognition particle 54 kDa protein (443 aa).

GTP contacts are provided by residues 107 to 114, 189 to 193, and 247 to 250; these read GVQGSGKT, DTAGR, and TKLD.

This sequence belongs to the GTP-binding SRP family. SRP54 subfamily. In terms of assembly, part of the signal recognition particle protein translocation system, which is composed of SRP and FtsY. Archaeal SRP consists of a 7S RNA molecule of 300 nucleotides and two protein subunits: SRP54 and SRP19.

The protein localises to the cytoplasm. It carries out the reaction GTP + H2O = GDP + phosphate + H(+). Its function is as follows. Involved in targeting and insertion of nascent membrane proteins into the cytoplasmic membrane. Binds to the hydrophobic signal sequence of the ribosome-nascent chain (RNC) as it emerges from the ribosomes. The SRP-RNC complex is then targeted to the cytoplasmic membrane where it interacts with the SRP receptor FtsY. The sequence is that of Signal recognition particle 54 kDa protein from Pyrococcus horikoshii (strain ATCC 700860 / DSM 12428 / JCM 9974 / NBRC 100139 / OT-3).